Here is a 95-residue protein sequence, read N- to C-terminus: Nucleoid-associated protein MMOB0740 (95 aa).

Belongs to the YbaB/EbfC family. In terms of assembly, homodimer.

It is found in the cytoplasm. The protein resides in the nucleoid. Functionally, binds to DNA and alters its conformation. May be involved in regulation of gene expression, nucleoid organization and DNA protection. The protein is Nucleoid-associated protein MMOB0740 of Mycoplasma mobile (strain ATCC 43663 / 163K / NCTC 11711) (Mesomycoplasma mobile).